A 66-amino-acid chain; its full sequence is Large ribosomal subunit protein bL35 (66 aa).

Positions 20-40 (GKIKSTQSAKRHGMTKRSKRS) are disordered. Residues 28-40 (AKRHGMTKRSKRS) show a composition bias toward basic residues.

The protein belongs to the bacterial ribosomal protein bL35 family.

The chain is Large ribosomal subunit protein bL35 from Ehrlichia chaffeensis (strain ATCC CRL-10679 / Arkansas).